A 792-amino-acid polypeptide reads, in one-letter code: 5-methyltetrahydropteroyltriglutamate--homocysteine methyltransferase (792 aa).

Residues 16–19 and lysine 112 each bind 5-methyltetrahydropteroyltri-L-glutamate; that span reads RELK. Residues 432–434 and glutamate 485 contribute to the L-homocysteine site; that span reads IGS. L-methionine is bound by residues 432 to 434 and glutamate 485; that span reads IGS. 5-methyltetrahydropteroyltri-L-glutamate is bound by residues 516–517 and tryptophan 562; that span reads RC. Aspartate 600 provides a ligand contact to L-homocysteine. Aspartate 600 serves as a coordination point for L-methionine. A 5-methyltetrahydropteroyltri-L-glutamate-binding site is contributed by glutamate 606. Zn(2+) is bound by residues histidine 642, cysteine 644, and glutamate 666. Histidine 695 serves as the catalytic Proton donor. Cysteine 727 contacts Zn(2+).

It belongs to the vitamin-B12 independent methionine synthase family. The cofactor is Zn(2+).

The enzyme catalyses 5-methyltetrahydropteroyltri-L-glutamate + L-homocysteine = tetrahydropteroyltri-L-glutamate + L-methionine. It functions in the pathway amino-acid biosynthesis; L-methionine biosynthesis via de novo pathway; L-methionine from L-homocysteine (MetE route): step 1/1. Its function is as follows. Catalyzes the transfer of a methyl group from 5-methyltetrahydrofolate to homocysteine resulting in methionine formation. In Cupriavidus necator (Alcaligenes eutrophus), this protein is 5-methyltetrahydropteroyltriglutamate--homocysteine methyltransferase.